Consider the following 270-residue polypeptide: uncharacterized protein (270 aa).

Residues 235 to 270 form a disordered region; it reads LADSDLEADSDDSESFEFVENPEPSENGSEPTIKND. The span at 238-251 shows a compositional bias: acidic residues; the sequence is SDLEADSDDSESFE. A compositionally biased stretch (low complexity) spans 255–270; it reads NPEPSENGSEPTIKND.

This is an uncharacterized protein from Halorubrum sp. PV6 (HRPV-1).